The following is a 129-amino-acid chain: Large ribosomal subunit protein mL53 (129 aa).

Residues 1–50 (MREKLNLLAKLKSVVYKFDPLNPNTRSIRSFIPLTTCKRSRQLAPECSIS) constitute a mitochondrion transit peptide.

The protein belongs to the mitochondrion-specific ribosomal protein mL53 family.

The protein localises to the mitochondrion. In Dictyostelium discoideum (Social amoeba), this protein is Large ribosomal subunit protein mL53 (mrpl53).